Consider the following 230-residue polypeptide: Protein UPS2, mitochondrial (230 aa).

The 175-residue stretch at 1 to 175 (MKLFQNSYDF…VLQVFSENWE (175 aa)) folds into the PRELI/MSF1 domain.

This sequence belongs to the slowmo family. As to quaternary structure, interacts with MDM35.

The protein localises to the mitochondrion inner membrane. It is found in the mitochondrion intermembrane space. Functionally, required for mitochondrial cristae morphogenesis and MGM1-processing. Controls the stability of mitochondrial phosphatidylethanolamine (PE). With UPS1, controls the level of cardiolipin in mitochondria. Cardiolipin is a unique phospholipid with four fatty acid chains and is present mainly in the mitochondrial inner membrane where it stabilizes the electron transport chain supercomplex between complexes III and IV through direct interaction of their subunits. This chain is Protein UPS2, mitochondrial (UPS2), found in Saccharomyces cerevisiae (strain ATCC 204508 / S288c) (Baker's yeast).